We begin with the raw amino-acid sequence, 166 residues long: UPF0304 protein VV1_2093 (166 aa).

Belongs to the UPF0304 family.

The sequence is that of UPF0304 protein VV1_2093 from Vibrio vulnificus (strain CMCP6).